The chain runs to 356 residues: tRNA N6-adenosine threonylcarbamoyltransferase (356 aa).

H115 and H119 together coordinate Fe cation. Substrate contacts are provided by residues 137–141 (LVSGG), D170, G183, and N280. D308 is a Fe cation binding site.

This sequence belongs to the KAE1 / TsaD family. Fe(2+) serves as cofactor.

The protein resides in the cytoplasm. The catalysed reaction is L-threonylcarbamoyladenylate + adenosine(37) in tRNA = N(6)-L-threonylcarbamoyladenosine(37) in tRNA + AMP + H(+). Required for the formation of a threonylcarbamoyl group on adenosine at position 37 (t(6)A37) in tRNAs that read codons beginning with adenine. Is involved in the transfer of the threonylcarbamoyl moiety of threonylcarbamoyl-AMP (TC-AMP) to the N6 group of A37, together with TsaE and TsaB. TsaD likely plays a direct catalytic role in this reaction. This is tRNA N6-adenosine threonylcarbamoyltransferase from Paracoccus denitrificans (strain Pd 1222).